Consider the following 116-residue polypeptide: Regulator of ribonuclease activity B (116 aa).

It belongs to the RraB family. Interacts with the C-terminal region of Rne.

The protein resides in the cytoplasm. Its function is as follows. Globally modulates RNA abundance by binding to RNase E (Rne) and regulating its endonucleolytic activity. Can modulate Rne action in a substrate-dependent manner by altering the composition of the degradosome. This chain is Regulator of ribonuclease activity B, found in Colwellia psychrerythraea (strain 34H / ATCC BAA-681) (Vibrio psychroerythus).